The chain runs to 220 residues: Lipoprotein-releasing system ATP-binding protein LolD (220 aa).

Residues 1-220 (MRAVDIHKSY…YRMKDGQWQS (220 aa)) form the ABC transporter domain. 37 to 44 (GASGAGKS) contacts ATP.

Belongs to the ABC transporter superfamily. Lipoprotein translocase (TC 3.A.1.125) family. The complex is composed of two ATP-binding proteins (LolD) and two transmembrane proteins (LolC and LolE).

The protein resides in the cell inner membrane. Its function is as follows. Part of the ABC transporter complex LolCDE involved in the translocation of mature outer membrane-directed lipoproteins, from the inner membrane to the periplasmic chaperone, LolA. Responsible for the formation of the LolA-lipoprotein complex in an ATP-dependent manner. The chain is Lipoprotein-releasing system ATP-binding protein LolD from Bdellovibrio bacteriovorus (strain ATCC 15356 / DSM 50701 / NCIMB 9529 / HD100).